A 197-amino-acid polypeptide reads, in one-letter code: Pyridoxal 5'-phosphate synthase subunit PdxT (197 aa).

53-55 (GES) serves as a coordination point for L-glutamine. Cys-85 (nucleophile) is an active-site residue. Residues Arg-114 and 142 to 143 (IR) each bind L-glutamine. Catalysis depends on charge relay system residues His-179 and Glu-181.

Belongs to the glutaminase PdxT/SNO family. In the presence of PdxS, forms a dodecamer of heterodimers. Only shows activity in the heterodimer.

It catalyses the reaction aldehydo-D-ribose 5-phosphate + D-glyceraldehyde 3-phosphate + L-glutamine = pyridoxal 5'-phosphate + L-glutamate + phosphate + 3 H2O + H(+). The enzyme catalyses L-glutamine + H2O = L-glutamate + NH4(+). The protein operates within cofactor biosynthesis; pyridoxal 5'-phosphate biosynthesis. Functionally, catalyzes the hydrolysis of glutamine to glutamate and ammonia as part of the biosynthesis of pyridoxal 5'-phosphate. The resulting ammonia molecule is channeled to the active site of PdxS. In Thermococcus onnurineus (strain NA1), this protein is Pyridoxal 5'-phosphate synthase subunit PdxT.